A 459-amino-acid chain; its full sequence is D(1)-like dopamine receptor (459 aa).

The Extracellular segment spans residues M1–R23. N4 is a glycosylation site (N-linked (GlcNAc...) asparagine). Residues V24 to T49 form a helical membrane-spanning segment. Residues K50 to N60 are Cytoplasmic-facing. The chain crosses the membrane as a helical span at residues F61–M87. At G88 to C96 the chain is on the extracellular side. Residues C96 and C187 are joined by a disulfide bond. Residues N97–V119 traverse the membrane as a helical segment. At D120–K138 the chain is on the cytoplasmic side. The chain crosses the membrane as a helical span at residues V139–H164. The Extracellular segment spans residues K165–L191. A helical membrane pass occupies residues N192 to T216. Residues R217–L269 are Cytoplasmic-facing. The helical transmembrane segment at K270–E297 threads the bilayer. The Extracellular portion of the chain corresponds to A298–T311. Residues F312–N333 form a helical membrane-spanning segment. At A334–C459 the chain is on the cytoplasmic side.

Belongs to the G-protein coupled receptor 1 family.

Its subcellular location is the cell membrane. The protein resides in the cell projection. The protein localises to the cilium membrane. Its function is as follows. Receptor for dopamine. This Takifugu rubripes (Japanese pufferfish) protein is D(1)-like dopamine receptor (d14).